We begin with the raw amino-acid sequence, 160 residues long: 3-hydroxyacyl-[acyl-carrier-protein] dehydratase FabZ (160 aa).

His-63 is an active-site residue.

Belongs to the thioester dehydratase family. FabZ subfamily.

The protein localises to the cytoplasm. It catalyses the reaction a (3R)-hydroxyacyl-[ACP] = a (2E)-enoyl-[ACP] + H2O. Functionally, involved in unsaturated fatty acids biosynthesis. Catalyzes the dehydration of short chain beta-hydroxyacyl-ACPs and long chain saturated and unsaturated beta-hydroxyacyl-ACPs. In Xylella fastidiosa (strain 9a5c), this protein is 3-hydroxyacyl-[acyl-carrier-protein] dehydratase FabZ.